We begin with the raw amino-acid sequence, 158 residues long: SsrA-binding protein (158 aa).

Positions 136 to 151 are enriched in basic and acidic residues; the sequence is KRADSKSRDWARDKQR. Positions 136–158 are disordered; that stretch reads KRADSKSRDWARDKQRIMKHSTR.

This sequence belongs to the SmpB family.

The protein localises to the cytoplasm. Functionally, required for rescue of stalled ribosomes mediated by trans-translation. Binds to transfer-messenger RNA (tmRNA), required for stable association of tmRNA with ribosomes. tmRNA and SmpB together mimic tRNA shape, replacing the anticodon stem-loop with SmpB. tmRNA is encoded by the ssrA gene; the 2 termini fold to resemble tRNA(Ala) and it encodes a 'tag peptide', a short internal open reading frame. During trans-translation Ala-aminoacylated tmRNA acts like a tRNA, entering the A-site of stalled ribosomes, displacing the stalled mRNA. The ribosome then switches to translate the ORF on the tmRNA; the nascent peptide is terminated with the 'tag peptide' encoded by the tmRNA and targeted for degradation. The ribosome is freed to recommence translation, which seems to be the essential function of trans-translation. This Photobacterium profundum (strain SS9) protein is SsrA-binding protein.